We begin with the raw amino-acid sequence, 345 residues long: Homeobox-leucine zipper protein HOX16 (345 aa).

Positions Leu76–Gln135 form a DNA-binding region, homeobox. Residues Lys134–Lys178 are leucine-zipper. The segment at Phe220–Ser241 is disordered.

Belongs to the HD-ZIP homeobox family. Class I subfamily. Expressed in seedlings, stems, leaf sheaths and blades and panicles.

The protein localises to the nucleus. In terms of biological role, probable transcription factor. The polypeptide is Homeobox-leucine zipper protein HOX16 (HOX16) (Oryza sativa subsp. indica (Rice)).